A 394-amino-acid polypeptide reads, in one-letter code: p-hydroxybenzoate hydroxylase (394 aa).

Residues Ser13, Glu32, 42–47 (RIRAGV), and Gln102 contribute to the FAD site. Residues Tyr201, 212 to 214 (SQR), and Tyr222 contribute to the substrate site. Asp286 is an FAD binding site. Pro293 provides a ligand contact to substrate. 299 to 300 (LN) is an FAD binding site.

The protein belongs to the aromatic-ring hydroxylase family. Homodimer. It depends on FAD as a cofactor.

It carries out the reaction 4-hydroxybenzoate + NADPH + O2 + H(+) = 3,4-dihydroxybenzoate + NADP(+) + H2O. The protein operates within aromatic compound metabolism; benzoate degradation via hydroxylation; 3,4-dihydroxybenzoate from benzoate: step 2/2. Its function is as follows. Catalyzes the incorporation of an atom of dioxygen into p-hydroxybenzoate (p-OHB) to form 3,4-dihydroxybenzoate (3,4DOHB). The reaction occurs in two parts: reduction of the flavin adenine dinucleotide (FAD) in the enzyme by reduced nicotinamide adenine dinucleotide phosphate (NADPH) in response to binding p-hydroxybenzoate to the enzyme and oxidation of reduced FAD with oxygen to form a hydroperoxide, which then oxygenates p-hydroxybenzoate. This chain is p-hydroxybenzoate hydroxylase, found in Pseudomonas aeruginosa (strain ATCC 15692 / DSM 22644 / CIP 104116 / JCM 14847 / LMG 12228 / 1C / PRS 101 / PAO1).